The following is a 150-amino-acid chain: D-aminoacyl-tRNA deacylase (150 aa).

A Gly-cisPro motif, important for rejection of L-amino acids motif is present at residues 138–139 (GP).

This sequence belongs to the DTD family. As to quaternary structure, homodimer.

The protein resides in the cytoplasm. The enzyme catalyses glycyl-tRNA(Ala) + H2O = tRNA(Ala) + glycine + H(+). The catalysed reaction is a D-aminoacyl-tRNA + H2O = a tRNA + a D-alpha-amino acid + H(+). In terms of biological role, an aminoacyl-tRNA editing enzyme that deacylates mischarged D-aminoacyl-tRNAs. Also deacylates mischarged glycyl-tRNA(Ala), protecting cells against glycine mischarging by AlaRS. Acts via tRNA-based rather than protein-based catalysis; rejects L-amino acids rather than detecting D-amino acids in the active site. By recycling D-aminoacyl-tRNA to D-amino acids and free tRNA molecules, this enzyme counteracts the toxicity associated with the formation of D-aminoacyl-tRNA entities in vivo and helps enforce protein L-homochirality. This is D-aminoacyl-tRNA deacylase from Flavobacterium johnsoniae (strain ATCC 17061 / DSM 2064 / JCM 8514 / BCRC 14874 / CCUG 350202 / NBRC 14942 / NCIMB 11054 / UW101) (Cytophaga johnsonae).